Reading from the N-terminus, the 339-residue chain is UDP-N-acetylglucosamine/UDP-N-acetylgalactosamine transporter nstp-4 (339 aa).

8 helical membrane-spanning segments follow: residues 44 to 64 (LSSTAVVCAEIIKLITCFFVI), 94 to 114 (LKVAVPAIMYVIQNNLLFFAL), 148 to 168 (YNWMALILLTAGVALVQYPSG), 186 to 206 (ILGLGAVLAACFSSGFAGVYF), 224 to 244 (LAFFSVFGALLVCWLYDWQAI), 255 to 275 (GVIWIVVLLQAYGGLVIALVV), 281 to 301 (ILKGFAVSLSIILSSFTSWLV), and 305 to 325 (LTITTTFAIGATVVIFATFLY).

This sequence belongs to the nucleotide-sugar transporter family. SLC35A subfamily. As to expression, widely expressed, including in pharynx and pharyngeal gland cells, seam cells, spermatheca, stomatointestinal muscle, vulva, and body wall muscle.

It localises to the golgi apparatus membrane. Its function is as follows. Uridine diphosphate-N-acetylglucosamine (UDP-GlcNAc) transporter in the Golgi apparatus. UDP-N-acetylgalactosamine (UDP-GalNAc) transporter in the Golgi apparatus. Apparently transports UDP-GlcNAc and UDP-GalNAc simultaneously, and independently, by an unknown mechanism. Functions redundantly with nucleotide sugar transporter srf-3. May be involved in gonadal development. The chain is UDP-N-acetylglucosamine/UDP-N-acetylgalactosamine transporter nstp-4 from Caenorhabditis elegans.